Consider the following 500-residue polypeptide: Histidinol dehydrogenase homolog 1 (500 aa).

Residues 1-25 are disordered; that stretch reads MPPAGGIFHRPPTTRKSRRLTPRSA. Residues 12 to 21 show a composition bias toward basic residues; sequence PTTRKSRRLT. Positions 313 and 316 each coordinate Zn(2+). Active-site proton acceptor residues include Glu-381 and His-382. 2 residues coordinate Zn(2+): Asp-415 and His-475.

Belongs to the histidinol dehydrogenase family. It depends on Zn(2+) as a cofactor.

The polypeptide is Histidinol dehydrogenase homolog 1 (Mesorhizobium japonicum (strain LMG 29417 / CECT 9101 / MAFF 303099) (Mesorhizobium loti (strain MAFF 303099))).